The primary structure comprises 147 residues: Basic phospholipase A2 beta-bungarotoxin A2 chain (147 aa).

Residues 1–19 form the signal peptide; the sequence is MYPAHLLVLSAVCVSLLGA. The propeptide occupies 20–27; that stretch reads ANIPPYPL. Intrachain disulfides connect C54–C146, C56–C72, C71–C127, C78–C120, C88–C113, and C106–C118. The Ca(2+) site is built by Y55, G57, and G59. Residue H75 is part of the active site. Residue D76 participates in Ca(2+) binding. The active site involves D121.

Belongs to the phospholipase A2 family. Group I subfamily. D49 sub-subfamily. As to quaternary structure, heterodimer; disulfide-linked. The A chains have phospholipase A2 activity and the B chains show homology with the basic protease inhibitors. It depends on Ca(2+) as a cofactor. In terms of tissue distribution, expressed by the venom gland.

The protein resides in the secreted. The enzyme catalyses a 1,2-diacyl-sn-glycero-3-phosphocholine + H2O = a 1-acyl-sn-glycero-3-phosphocholine + a fatty acid + H(+). Functionally, snake venom phospholipase A2 (PLA2) that inhibits neuromuscular transmission by blocking acetylcholine release from the nerve termini. PLA2 catalyzes the calcium-dependent hydrolysis of the 2-acyl groups in 3-sn-phosphoglycerides. The chain is Basic phospholipase A2 beta-bungarotoxin A2 chain from Bungarus caeruleus (Indian krait).